Here is a 166-residue protein sequence, read N- to C-terminus: Ribosome-binding factor A (166 aa).

The tract at residues 122-166 (HVADETDVEDSTDHEDDVTNSEDETKHVDIDTDSEEGTNTDGKAQ) is disordered. The span at 126-143 (ETDVEDSTDHEDDVTNSE) shows a compositional bias: acidic residues.

This sequence belongs to the RbfA family. As to quaternary structure, monomer. Binds 30S ribosomal subunits, but not 50S ribosomal subunits or 70S ribosomes.

The protein resides in the cytoplasm. One of several proteins that assist in the late maturation steps of the functional core of the 30S ribosomal subunit. Associates with free 30S ribosomal subunits (but not with 30S subunits that are part of 70S ribosomes or polysomes). Required for efficient processing of 16S rRNA. May interact with the 5'-terminal helix region of 16S rRNA. This is Ribosome-binding factor A from Pseudoalteromonas translucida (strain TAC 125).